The sequence spans 143 residues: 3-hydroxyacyl-[acyl-carrier-protein] dehydratase FabZ (143 aa).

The active site involves H48.

This sequence belongs to the thioester dehydratase family. FabZ subfamily.

The protein localises to the cytoplasm. The enzyme catalyses a (3R)-hydroxyacyl-[ACP] = a (2E)-enoyl-[ACP] + H2O. Its function is as follows. Involved in unsaturated fatty acids biosynthesis. Catalyzes the dehydration of short chain beta-hydroxyacyl-ACPs and long chain saturated and unsaturated beta-hydroxyacyl-ACPs. This Roseiflexus castenholzii (strain DSM 13941 / HLO8) protein is 3-hydroxyacyl-[acyl-carrier-protein] dehydratase FabZ.